The primary structure comprises 652 residues: ATP-binding cassette sub-family G member 5 (652 aa).

Residues 1–30 are disordered; the sequence is MSELPFLSPEGARGPHNNRGSQSSLEEGSV. Residues 1-384 lie on the Cytoplasmic side of the membrane; it reads MSELPFLSPE…RVTRNLMRNK (384 aa). Positions 18–30 are enriched in polar residues; that stretch reads NRGSQSSLEEGSV. Residues 39–294 form the ABC transporter domain; that stretch reads LGVLNVSFSV…FNNCGYPCPE (256 aa). 87–94 lines the ATP pocket; the sequence is GSSGSGKT. Residues 385–405 form a helical membrane-spanning segment; the sequence is QVVIMRLVQNLIMGLFLIFYL. The 258-residue stretch at 389 to 646 folds into the ABC transmembrane type-2 domain; sequence MRLVQNLIMG…ILGMVVFKVR (258 aa). The Extracellular portion of the chain corresponds to 406–422; sequence LRVQNNMLKGAVQDRVG. The helical transmembrane segment at 423–443 threads the bilayer; it reads LLYQLVGATPYTGMLNAVNLF. The Cytoplasmic segment spans residues 444 to 468; it reads PMLRAVSDQESQDGLYQKWQMLLAY. Residues 469-490 form a helical membrane-spanning segment; it reads VLHALPFSIVATVIFSSVCYWT. The Extracellular portion of the chain corresponds to 491 to 501; the sequence is LGLYPEVARFG. The helical transmembrane segment at 502 to 522 threads the bilayer; that stretch reads YFSAALLAPHLIGEFLTLVLL. Topologically, residues 523-529 are cytoplasmic; the sequence is GMVQNPN. Residues 530–550 traverse the membrane as a helical segment; that stretch reads IVNSIVALLSISGLLIGSGFI. The Extracellular portion of the chain corresponds to 551–624; sequence RNIEEMPIPL…PGATSRFTTN (74 aa). N-linked (GlcNAc...) asparagine glycosylation is found at asparagine 585 and asparagine 592. Residues 625-645 traverse the membrane as a helical segment; the sequence is FLILYSFIPTLVILGMVVFKV. Residues 646–652 lie on the Cytoplasmic side of the membrane; it reads RDYLISR.

Belongs to the ABC transporter superfamily. ABCG family. Eye pigment precursor importer (TC 3.A.1.204) subfamily. As to quaternary structure, heterodimer with ABCG8. Mg(2+) serves as cofactor. N-glycosylated. N-glycosylation is important for efficient export out of the endoplasmic reticulum. As to expression, detected in liver (at protein level). Expressed only in liver and intestine.

Its subcellular location is the cell membrane. It is found in the apical cell membrane. It carries out the reaction cholesterol(in) + ATP + H2O = cholesterol(out) + ADP + phosphate + H(+). It catalyses the reaction sitosterol(in) + ATP + H2O = sitosterol(out) + ADP + phosphate + H(+). Its function is as follows. ABCG5 and ABCG8 form an obligate heterodimer that mediates Mg(2+)- and ATP-dependent sterol transport across the cell membrane. Plays an essential role in the selective transport of dietary plant sterols and cholesterol in and out of the enterocytes and in the selective sterol excretion by the liver into bile. Required for normal sterol homeostasis. The heterodimer with ABCG8 has ATPase activity. This is ATP-binding cassette sub-family G member 5 from Rattus norvegicus (Rat).